The chain runs to 210 residues: UPF0637 protein RBAM_014510 (210 aa).

The protein belongs to the UPF0637 family.

In Bacillus velezensis (strain DSM 23117 / BGSC 10A6 / LMG 26770 / FZB42) (Bacillus amyloliquefaciens subsp. plantarum), this protein is UPF0637 protein RBAM_014510.